The chain runs to 255 residues: MRTDGRNNRELRPVHIQPHYIKHAEGSVLIEIGDTRVICTATVEDKVPPFMRGGGKGWITAEYGMLPRATEQRNAREASKGKVSGRTMEIQRLIGRALRSVVELEQLGERTVWIDCDVIQADGGTRTASITGAYVALVLALSKLVAEGKLESLPVRDFLAATSVGIDPEHGVILDLNYSEDARAKVDMNVVMTGAGQFVEIQGTGEEASFSRAELEELLETAQLGIEQLITIQRRVLGEQAALIGEKVEQEGKSE.

Phosphate is bound by residues Arg86 and 124–126 (GTR).

The protein belongs to the RNase PH family. Homohexameric ring arranged as a trimer of dimers.

It carries out the reaction tRNA(n+1) + phosphate = tRNA(n) + a ribonucleoside 5'-diphosphate. Its function is as follows. Phosphorolytic 3'-5' exoribonuclease that plays an important role in tRNA 3'-end maturation. Removes nucleotide residues following the 3'-CCA terminus of tRNAs; can also add nucleotides to the ends of RNA molecules by using nucleoside diphosphates as substrates, but this may not be physiologically important. Probably plays a role in initiation of 16S rRNA degradation (leading to ribosome degradation) during starvation. The sequence is that of Ribonuclease PH from Geobacillus thermodenitrificans (strain NG80-2).